Here is a 311-residue protein sequence, read N- to C-terminus: MKVAVIGAAGGIGQALALLLKNRLPAGSDLALYDIAPVTPGVAADLSHIPTPVSIKGYAGEDPTPALEGADVVLISAGVARKPGMDRADLFNVNAGIVKSLAEKIAVVCPTACVGIITNPVNTTVPIAAEVLKKAGVYDKRKLFGVTTLDVIRSETFVAELKDKDPGDVRVPVIGGHSGVTILPLLSQVEGVEFTAEEVEALTKRIQNAGTEVVEAKAGGGSATLSMGQAACRFGLALVRALQGEEGVVECAYVEGDSEHASYFAQPVKLGKDGVEEVLSYGALSDYEKSALDGMLETLNGDINIGVEFAK.

NAD(+) is bound by residues 7–13 (GAAGGIG) and Asp34. Residues Arg81 and Arg87 each contribute to the substrate site. NAD(+) is bound by residues Asn94 and 117 to 119 (ITN). The substrate site is built by Asn119 and Arg153. The Proton acceptor role is filled by His177. An NAD(+)-binding site is contributed by Met227.

Belongs to the LDH/MDH superfamily. MDH type 1 family. As to quaternary structure, homodimer.

It carries out the reaction (S)-malate + NAD(+) = oxaloacetate + NADH + H(+). Catalyzes the reversible oxidation of malate to oxaloacetate. This Vibrio campbellii (strain ATCC BAA-1116) protein is Malate dehydrogenase.